A 465-amino-acid polypeptide reads, in one-letter code: Neuromedin-K receptor (465 aa).

The Extracellular portion of the chain corresponds to 1–84 (MATLPAAETW…TNQFVQPSWR (84 aa)). N-linked (GlcNAc...) asparagine glycans are attached at residues Asn23, Asn50, and Asn73. The chain crosses the membrane as a helical span at residues 85-107 (IALWSLAYGVVVAVAVLGNLIVI). The Cytoplasmic segment spans residues 108 to 117 (WIILAHKRMR). A helical transmembrane segment spans residues 118–139 (TVTNYFLVNLAFSDASMAAFNT). The Extracellular portion of the chain corresponds to 140–159 (LVNFIYALHSEWYFGANYCR). Cysteines 158 and 233 form a disulfide. Residues 160-181 (FQNFFPITAVFASIYSMTAIAV) traverse the membrane as a helical segment. The Cytoplasmic portion of the chain corresponds to 182 to 201 (DRYMAIIDPLKPRLSATATK). Residues 202-222 (IVIGSIWILAFLLAFPQCLYS) traverse the membrane as a helical segment. Residues 223 to 245 (KTKVMPGRTLCFVQWPEGPKQHF) are Extracellular-facing. Residues 246 to 270 (TYHIIVIILVYCFPLLIMGITYTIV) traverse the membrane as a helical segment. The Cytoplasmic segment spans residues 271–299 (GITLWGGEIPGDTCDKYHEQLKAKRKVVK). A helical membrane pass occupies residues 300-321 (MMIIVVMTFAICWLPYHIYFIL). The Extracellular segment spans residues 322–334 (TAIYQQLNRWKYI). A helical membrane pass occupies residues 335–359 (QQVYLASFWLAMSSTMYNPIIYCCL). Topologically, residues 360 to 465 (NKRFRAGFKR…SPYTSVDEYS (106 aa)) are cytoplasmic. Residue Cys374 is the site of S-palmitoyl cysteine attachment. Positions 415–465 (PNDADTTRSSRKKRATPRDPSFNGCSRRNSKSASATSSFISSPYTSVDEYS) are disordered. Residues 445-465 (KSASATSSFISSPYTSVDEYS) are compositionally biased toward low complexity.

It belongs to the G-protein coupled receptor 1 family. Post-translationally, the anchoring of this receptor to the plasma membrane is probably mediated by the palmitoylation of a cysteine residue.

It is found in the cell membrane. Its function is as follows. This is a receptor for the tachykinin neuropeptide neuromedin-K (neurokinin B). It is associated with G proteins that activate a phosphatidylinositol-calcium second messenger system. The rank order of affinity of this receptor to tachykinins is: neuromedin-K &gt; substance K &gt; substance P. The chain is Neuromedin-K receptor (TACR3) from Homo sapiens (Human).